Consider the following 530-residue polypeptide: ATP-dependent RNA helicase DBP3 (530 aa).

Basic and acidic residues predominate over residues 1 to 20 (MSKDEIKDKKRKSEEYEVVD). Residues 1–77 (MSKDEIKDKK…VASVSTSSTV (77 aa)) form a disordered region. Residues 19 to 58 (VDKKKHKKDKKDKKEKKDKKEKKLKKDKKDKKDKKETKSE) adopt a coiled-coil conformation. Basic residues predominate over residues 21-50 (KKKHKKDKKDKKEKKDKKEKKLKKDKKDKK). Low complexity predominate over residues 67–77 (SVASVSTSSTV). The Q motif signature appears at 117 to 143 (LSFSHISLDSRIQAEISKFPKPTPIQA). A Helicase ATP-binding domain is found at 146 to 322 (WPYLLAGKDV…STFMNSPIKV (177 aa)). 159–166 (AETGSGKT) is an ATP binding site. Positions 269-272 (DEAD) match the DEAD box motif. Residues 351–500 (KLLELLKKYQ…PVPEELKKFG (150 aa)) form the Helicase C-terminal domain.

The protein belongs to the DEAD box helicase family. DDX5/DBP2 subfamily.

It localises to the nucleus. Its subcellular location is the nucleolus. It catalyses the reaction ATP + H2O = ADP + phosphate + H(+). Its function is as follows. ATP-dependent RNA helicase required for 60S ribosomal subunit synthesis. Involved in efficient pre-rRNA processing, predominantly at site A3, which is necessary for the normal formation of 25S and 5.8S rRNAs. The polypeptide is ATP-dependent RNA helicase DBP3 (DBP3) (Vanderwaltozyma polyspora (strain ATCC 22028 / DSM 70294 / BCRC 21397 / CBS 2163 / NBRC 10782 / NRRL Y-8283 / UCD 57-17) (Kluyveromyces polysporus)).